A 174-amino-acid chain; its full sequence is Beta-lactoglobulin (174 aa).

An N-terminal signal peptide occupies residues 1 to 18; the sequence is MKFLLLTVGLALIGAIQA. Disulfide bonds link C79-C172 and C122-C134.

It belongs to the calycin superfamily. Lipocalin family. In terms of assembly, monomer.

Its subcellular location is the secreted. Its function is as follows. Lactoglobulin is the primary component of whey, it binds retinol and is probably involved in the transport of that molecule. In Notamacropus eugenii (Tammar wallaby), this protein is Beta-lactoglobulin (LGB).